A 618-amino-acid chain; its full sequence is Sodium/iodide cotransporter (618 aa).

At 1 to 14 (MEGAEAGARATFGA) the chain is on the extracellular side. The chain crosses the membrane as a helical span at residues 15–31 (WDYGVFATMLLVSTGIG). Topologically, residues 32–56 (LWVGLARGGQRSADDFFTGGRQLAA) are cytoplasmic. A discontinuously helical transmembrane segment spans residues 57-80 (VPVGLSLAASFMSAVQVLGVPAEA). Na(+) contacts are provided by Ser69, Val71, and Gln72. Residue Val76 participates in iodide binding. Residues 81–84 (ARYG) are Extracellular-facing. The helical transmembrane segment at 85–105 (LKFLWMCAGQLLNSLLTAFLF) threads the bilayer. Met90 is a binding site for iodide. Topologically, residues 106–130 (LPIFYRLGLTSTYQYLELRFSRAVR) are cytoplasmic. The chain crosses the membrane as a helical span at residues 131 to 157 (LCGTLQYLVATMLYTGIVIYAPALILN). Residue Tyr144 participates in Na(+) binding. The Extracellular portion of the chain corresponds to 158–163 (QVTGLD). A helical transmembrane segment spans residues 164-181 (IWASLLSTGIICTLYTTV). Residues 182 to 189 (GGMKAVVW) lie on the Cytoplasmic side of the membrane. A helical membrane pass occupies residues 190–208 (TDVFQVVVMLVGFWVILAR). At 209–243 (GVILLGGPRNVLSLAQNHSRINLMDFDPDPRSRYT) the chain is on the extracellular side. A discontinuously helical transmembrane segment spans residues 244–266 (FWTFIVGGTLVWLSMYGVNQAQV). Residue Trp255 participates in iodide binding. A Na(+)-binding site is contributed by Met258. Residues 267–278 (QRYVACHTEGKA) are Cytoplasmic-facing. A helical membrane pass occupies residues 279–301 (KLALLVNQLGLFLIVASAACCGI). Over 302-335 (VMFVYYKDCDPLLTGRISAPDQYMPLLVLDIFED) the chain is Extracellular. The chain crosses the membrane as a helical span at residues 336 to 363 (LPGVPGLFLACAYSGTLSTASTSINAMA). Over 364-386 (AVTVEDLIKPRMPGLAPRKLVFI) the chain is Cytoplasmic. The chain crosses the membrane as a helical span at residues 387–408 (SKGLSFIYGSACLTVAALSSLL). Over 409–411 (GGG) the chain is Extracellular. The helical transmembrane segment at 412–437 (VLQGSFTVMGVISGPLLGAFTLGMLL) threads the bilayer. Position 413 (Leu413) interacts with iodide. The Na(+) site is built by Ser416 and Phe417. Residue Phe417 participates in iodide binding. Residues 438-441 (PACN) are Cytoplasmic-facing. A helical membrane pass occupies residues 442-465 (TPGVLSGLAAGLAVSLWVAVGATL). Topologically, residues 466-520 (YPPGEQTMGVLPTSAAGCTNDSVLLGPPGATNASNGIPSSGMDTGRPALADTFYA) are extracellular. 2 N-linked (GlcNAc...) asparagine glycosylation sites follow: Asn485 and Asn497. A helical membrane pass occupies residues 521 to 545 (ISYLYYGALGTLTTMLCGALISYLT). Topologically, residues 546–618 (GPTKRSSLGP…YLGHDVETNL (73 aa)) are cytoplasmic. Ser551 is subject to Phosphoserine; by PKA. The interval 587-618 (EDIPAVTKKPPGLKPGAETHPLYLGHDVETNL) is disordered.

This sequence belongs to the sodium:solute symporter (SSF) (TC 2.A.21) family. Monomer.

The protein resides in the cell membrane. The protein localises to the cytoplasm. The enzyme catalyses iodide(out) + 2 Na(+)(out) = iodide(in) + 2 Na(+)(in). It catalyses the reaction chlorate(out) + 2 Na(+)(out) = chlorate(in) + 2 Na(+)(in). The catalysed reaction is thiocyanate(out) + 2 Na(+)(out) = thiocyanate(in) + 2 Na(+)(in). It carries out the reaction nitrate(out) + 2 Na(+)(out) = nitrate(in) + 2 Na(+)(in). The enzyme catalyses selenocyanate(out) + 2 Na(+)(out) = selenocyanate(in) + 2 Na(+)(in). Perchlorate inhibits iodide transport activity. Oxyanions inhibit iodide transport activity by blocking the binding sites for iodide and one of the sodium ions. In terms of biological role, sodium:iodide symporter that mediates the transport of iodide into the thyroid gland. Can also mediate the transport of chlorate, thiocynate, nitrate and selenocynate. The polypeptide is Sodium/iodide cotransporter (Slc5a5) (Rattus norvegicus (Rat)).